We begin with the raw amino-acid sequence, 285 residues long: Extracellular metalloprotease SMAC_06893 (285 aa).

The N-terminal stretch at 1–18 is a signal peptide; that stretch reads MQIKSLLLAAAAAPAALG. Histidine 197 provides a ligand contact to Zn(2+). Glutamate 198 is an active-site residue. Histidine 201 contributes to the Zn(2+) binding site. An intrachain disulfide couples cysteine 233 to cysteine 260. An N-linked (GlcNAc...) asparagine glycan is attached at asparagine 282.

Belongs to the peptidase M43B family.

It is found in the secreted. Secreted metalloproteinase that allows assimilation of proteinaceous substrates. In Sordaria macrospora (strain ATCC MYA-333 / DSM 997 / K(L3346) / K-hell), this protein is Extracellular metalloprotease SMAC_06893.